Reading from the N-terminus, the 82-residue chain is Small ribosomal subunit protein bS16 (82 aa).

It belongs to the bacterial ribosomal protein bS16 family.

The protein is Small ribosomal subunit protein bS16 of Cyanothece sp. (strain PCC 7425 / ATCC 29141).